The chain runs to 460 residues: uncharacterized protein (460 aa).

This sequence to yeast YGL164c.

This is an uncharacterized protein from Schizosaccharomyces pombe (strain 972 / ATCC 24843) (Fission yeast).